A 705-amino-acid chain; its full sequence is MSQQYSRRGGGKAKRTQVDAEKKFKLDTLTELFPDWTNEDLIDLVHEFEDLETIIDKITTGAVTKWDEVKKPSKKDRQQKEPAGDVEHIHAGSAAAAFGASAQAQGAPASLQRSHHSAGHQNNAKPYQRQSKYSNSPRQGKQQHQRKEKVAKENLKPAGQPAKSTASSTSWAAMLSKKEDSKLQAPEQQLEEQPQAQSQAQQTEEPVAKESQTEKKVGPQPVAAPLHEEQDSKPKKMTWAAIASKPPKHAENASKKPQEILQNVQDLKKEINKIATEDTAVEHSETTVTHSEVGVNAQAEHESFPIEDGARSVGADDTYYAENVDATNEDAAATVNGNAPAASEEAAAQEDASNANANVPVSLPAEANHQASQQVSFGSEEKQQTPQQPSQQGGMHAGQHVVSQVPQSAQHSSQAAAQTSQQVASQAPQQQTPQQAYYQDTYTQQLPQQQAQAAQAQQYYMNQYQFPGYSYPGMFDSQSAYPVYNHQQFAVPQQGQPTAQSSQNSQQAQSQSQQQQQQQQQQQQQQQQQQQQQQQQQQQYGIPPGYVQAGELAAQSPASTHTQPQQQPQYGGYGMPYYFYQQSFPYAQPQYGMAGQYPYQVPKAAYNYYQPQQMSQAGNQATHQSQSSQNDDSSSASAANPQQGQQGGANSQQQSQAAAAQAQAAAQAQFQQYYQFQQQAAANQQGMPYGYSGYDYTSQTSRGFY.

Disordered regions lie at residues 1 to 20 (MSQQYSRRGGGKAKRTQVDA), 62 to 264 (AVTK…LQNV), 277 to 438 (EDTA…QAYY), 491 to 512 (VPQQGQPTAQSSQNSQQAQSQS), and 614 to 656 (MSQA…QQSQ). Residues 21–63 (EKKFKLDTLTELFPDWTNEDLIDLVHEFEDLETIIDKITTGAV) form the CUE domain. Residues 65–90 (KWDEVKKPSKKDRQQKEPAGDVEHIH) are compositionally biased toward basic and acidic residues. The span at 91–112 (AGSAAAAFGASAQAQGAPASLQ) shows a compositional bias: low complexity. Residues 119-140 (GHQNNAKPYQRQSKYSNSPRQG) show a composition bias toward polar residues. 2 stretches are compositionally biased toward low complexity: residues 162–173 (AKSTASSTSWAA) and 184–205 (QAPEQQLEEQPQAQSQAQQTEE). 3 stretches are compositionally biased toward basic and acidic residues: residues 206–217 (PVAKESQTEKKV), 248–258 (KHAENASKKPQ), and 299–310 (AEHESFPIEDGA). Composition is skewed to low complexity over residues 331 to 358 (AAATVNGNAPAASEEAAAQEDASNANAN), 399 to 438 (QHVVSQVPQSAQHSSQAAAQTSQQVASQAPQQQTPQQAYY), and 500 to 512 (QSSQNSQQAQSQS). A compositionally biased stretch (polar residues) spans 614-623 (MSQAGNQATH). Over residues 624–656 (QSQSSQNDDSSSASAANPQQGQQGGANSQQQSQ) the composition is skewed to low complexity.

Belongs to the DEF1 family. In terms of assembly, homodimer; may form higher order oligomers. Interacts with the large RNA polymerase II subunit RPO21; the interaction is direct and serves to bridge RPO21 to the Elongin complex in a manner dependent on transcription stress. Interacts with RAD26. Ubiquitinated. Post-translationally, proteolytically cleaved by the proteasome in response to transcription stress; the resulting N-terminal form constitutes the activated nuclear form and the C-terminal portion is degraded.

It is found in the cytoplasm. The protein localises to the nucleus. The protein resides in the chromosome. Its subcellular location is the telomere. Recruits the ubiquitination machinery to RNA polymerase II for polyubiquitination, removal and degradation, when the transcription-coupled repair (TCR) factor RAD26 fails to efficiently displace stalled RNA polymerase II. Also involved in telomere length regulation. Binds DNA. In Eremothecium gossypii (strain ATCC 10895 / CBS 109.51 / FGSC 9923 / NRRL Y-1056) (Yeast), this protein is RNA polymerase II degradation factor 1 (DEF1).